We begin with the raw amino-acid sequence, 292 residues long: Probable ABC transporter phosphonate/phosphite binding protein PhnD2 (292 aa).

Positions 1-20 are cleaved as a signal peptide; that stretch reads MKLKSLLSVFTISIVALTSA. C21 carries N-palmitoyl cysteine lipidation. The S-diacylglycerol cysteine moiety is linked to residue C21.

Belongs to the phosphate/phosphite/phosphonate binding protein family. In terms of assembly, the complex may be composed of two ATP-binding proteins (PhnC2), two transmembrane proteins (PhnE2) and a solute-binding protein (PhnD2).

The protein resides in the cell membrane. Its function is as follows. Probably part of the ABC transporter complex PhnC2D2E2. Binds strongly to methylphosphonate (MPn), ethylphosphonate (EPn) and inorganic phosphite. This is Probable ABC transporter phosphonate/phosphite binding protein PhnD2 from Prochlorococcus marinus (strain MIT 9301).